The chain runs to 28 residues: Dermaseptin-DI2 (28 aa).

Expressed by the skin glands.

The protein localises to the secreted. Functionally, has antibacterial activity against the Gram-positive bacteria S.aureus and E.faecalis, and the Gram-negative bacteria P.aeruginosa and E.coli. Has antiprotozoal activity against T.cruzi. Has antifungal activity against the yeasts C.tropicalis (MIC=10.9 uM), C.guilliermondii (MIC=21.8 uM), C.albicans (MIC=21.8 uM) and C.albicans ATCC 1023 (MIC=10.9 uM). Decreases viability of murine peritoneal cells. Fuses to, and disrupts liposomes. This Phyllomedusa distincta (Monkey frog) protein is Dermaseptin-DI2.